A 522-amino-acid chain; its full sequence is Gypsy retrotransposon integrase-like protein 1 (522 aa).

Residues 135-292 (KVENPWSLVT…TPYFQMFSRN (158 aa)) form the Integrase catalytic domain.

The sequence is that of Gypsy retrotransposon integrase-like protein 1 (GIN1) from Macaca fascicularis (Crab-eating macaque).